Reading from the N-terminus, the 367-residue chain is WD repeat-containing protein 31 (367 aa).

WD repeat units follow at residues 53–90 (AFQEYSPAHMDTVSVVAALNSDLCVSGGKDKTVVAYNW), 94–132 (NVVKRFKGHEHEITKVACIPKSSQFFSASRDRMVMMWDL), 137–175 (QPRQQLCGHAMVVTGLAVSPDSSQLCTGSRDNTLLLWDV), 179–217 (QSVERASVSRNVVTHLCWVPREPYILQTSEDKTLRLWDS), 221–264 (QVAH…LWDL), 269–311 (NRIC…IWNQ), and 315–353 (ACLFTLSLDGSGPLTSLAVGDAISLLCASFNRGIHLLRM).

The polypeptide is WD repeat-containing protein 31 (WDR31) (Homo sapiens (Human)).